The chain runs to 124 residues: Multifunctional methyltransferase subunit TRM112 homolog A (124 aa).

A TRM112 domain is found at 2 to 120; that stretch reads RLITHNMLSC…NKGIPNMLLH (119 aa).

This sequence belongs to the TRM112 family. As to quaternary structure, interacts with TRM9.

Acts as an activator of both rRNA/tRNA and protein methyltransferases. Required for TRM9 tRNA methyltransferase activity. Involved in the regulation of cell division progression during organ growth. Required for the expression of cell cycle-related genes, and the G2-M phase progression during organogenesis. The chain is Multifunctional methyltransferase subunit TRM112 homolog A from Arabidopsis thaliana (Mouse-ear cress).